The following is a 499-amino-acid chain: Putative sodium-dependent excitatory amino acid transporter glt-4 (499 aa).

Topologically, residues 1-7 (MAKLSKE) are cytoplasmic. Transmembrane regions (helical) follow at residues 8 to 28 (NLLL…GFSL), 50 to 70 (FVQM…ITSL), and 87 to 107 (IYYT…VSVI). A glycan (N-linked (GlcNAc...) asparagine) is linked at N165. The next 3 membrane-spanning stretches (helical) occupy residues 194–217 (VSDG…IGVI), 227–254 (FFKS…TFLI), and 276–297 (ITVI…CVVL). Residues 303 to 333 (IKFVGGMAQALLTALATSSSSATLPLSIKCC) constitute an intramembrane region (discontinuously helical). 320–322 (SSS) lines the L-aspartate pocket. A helical membrane pass occupies residues 343 to 369 (VTRFVLPLGATINMDGTALYEAVAAIY). G351, T353, and N355 together coordinate Na(+). L-aspartate contacts are provided by residues T359, 400 to 404 (IPQAG), D433, and N440. An intramembrane region (discontinuously helical) is located at residues 383–416 (VVLVSLTATLASIGAAGIPQAGIVTMIMVLIAIG). A helical transmembrane segment spans residues 430–451 (FMLDRLRTTVNVHGDSIATAVI). 2 residues coordinate Na(+): N440 and D444.

Belongs to the dicarboxylate/amino acid:cation symporter (DAACS) (TC 2.A.23) family.

The protein resides in the cell membrane. In terms of biological role, sodium-dependent, high-affinity amino acid transporter that mediates the uptake of L-glutamate and also L-aspartate and D-aspartate. Functions as a symporter that transports one amino acid molecule together with two or three Na(+) ions and one proton, in parallel with the counter-transport of one K(+) ion. Mediates Cl(-) flux that is not coupled to amino acid transport; this avoids the accumulation of negative charges due to aspartate and Na(+) symport. This chain is Putative sodium-dependent excitatory amino acid transporter glt-4 (glt-4), found in Caenorhabditis elegans.